Here is a 985-residue protein sequence, read N- to C-terminus: Regulator of telomere elongation helicase 1 homolog (985 aa).

Positions 7 to 303 (AGIPVHFPFE…QDMGGDEPKD (297 aa)) constitute a Helicase ATP-binding domain. 42 to 49 (SPTGTGKT) is an ATP binding site. [4Fe-4S] cluster-binding residues include cysteine 146, cysteine 164, cysteine 173, and cysteine 209. Positions 252–255 (DEAH) match the DEAH box motif. Residues 858-884 (GSSGMVKIHKRERSSPTQPESSSQVSK) form a disordered region. A compositionally biased stretch (polar residues) spans 872–882 (SPTQPESSSQV). Position 874 is a phosphothreonine (threonine 874).

This sequence belongs to the helicase family. RAD3/XPD subfamily.

It localises to the nucleus. The enzyme catalyses ATP + H2O = ADP + phosphate + H(+). A probable ATP-dependent DNA helicase implicated in DNA repair and the maintenance of genomic stability. Acts as an anti-recombinase to counteract toxic recombination and limit crossover during meiosis. Regulates meiotic recombination and crossover homeostasis by physically dissociating strand invasion events and thereby promotes noncrossover repair by meiotic synthesis dependent strand annealing (SDSA) as well as disassembly of D loop recombination intermediates. The sequence is that of Regulator of telomere elongation helicase 1 homolog from Drosophila yakuba (Fruit fly).